Reading from the N-terminus, the 611-residue chain is tRNA uridine 5-carboxymethylaminomethyl modification enzyme MnmG (611 aa).

FAD contacts are provided by residues 8–13 (GAGHAG), Val120, and Ser175. Position 268–282 (268–282 (GPRYCPSIEDKIVRF)) interacts with NAD(+). Gln365 is an FAD binding site.

This sequence belongs to the MnmG family. Homodimer. Heterotetramer of two MnmE and two MnmG subunits. It depends on FAD as a cofactor.

The protein localises to the cytoplasm. Its function is as follows. NAD-binding protein involved in the addition of a carboxymethylaminomethyl (cmnm) group at the wobble position (U34) of certain tRNAs, forming tRNA-cmnm(5)s(2)U34. This Mycoplasmoides gallisepticum (strain R(low / passage 15 / clone 2)) (Mycoplasma gallisepticum) protein is tRNA uridine 5-carboxymethylaminomethyl modification enzyme MnmG.